The primary structure comprises 1322 residues: Phosphoribosylformylglycinamidine synthase (1322 aa).

300 to 311 is an ATP binding site; the sequence is GASTGAGGEIRD. A compositionally biased stretch (polar residues) spans 593–608; sequence QQTPQRANHTETSPTP. The disordered stretch occupies residues 593–613; that stretch reads QQTPQRANHTETSPTPNTLPP. ATP is bound at residue Ala-702. Residues Asp-703, Glu-742, Asn-746, and Asp-915 each coordinate Mg(2+). Ser-917 contributes to the ATP binding site. The Glutamine amidotransferase type-1 domain maps to 1073 to 1322; the sequence is VAILREQGIN…LFRNARAWVG (250 aa). Residue Cys-1166 is the Nucleophile of the active site. Residues His-1287 and Glu-1289 contribute to the active site.

This sequence in the N-terminal section; belongs to the FGAMS family. In terms of assembly, monomer.

The protein localises to the cytoplasm. It catalyses the reaction N(2)-formyl-N(1)-(5-phospho-beta-D-ribosyl)glycinamide + L-glutamine + ATP + H2O = 2-formamido-N(1)-(5-O-phospho-beta-D-ribosyl)acetamidine + L-glutamate + ADP + phosphate + H(+). It functions in the pathway purine metabolism; IMP biosynthesis via de novo pathway; 5-amino-1-(5-phospho-D-ribosyl)imidazole from N(2)-formyl-N(1)-(5-phospho-D-ribosyl)glycinamide: step 1/2. In terms of biological role, phosphoribosylformylglycinamidine synthase involved in the purines biosynthetic pathway. Catalyzes the ATP-dependent conversion of formylglycinamide ribonucleotide (FGAR) and glutamine to yield formylglycinamidine ribonucleotide (FGAM) and glutamate. The chain is Phosphoribosylformylglycinamidine synthase from Xylella fastidiosa (strain 9a5c).